We begin with the raw amino-acid sequence, 572 residues long: uncharacterized protein (572 aa).

Residues 13–45 are disordered; that stretch reads ALIAKPKGKTVSGDGADPKKRGRPKKNATEPAV. Positions 177–204 form a coiled coil; that stretch reads VLTKEMEEKLEALDRDMRTAEETKVSIA.

This is an uncharacterized protein from Dryophytes versicolor (chameleon treefrog).